A 156-amino-acid chain; its full sequence is Small ribosomal subunit protein uS7 (156 aa).

It belongs to the universal ribosomal protein uS7 family. Part of the 30S ribosomal subunit. Contacts proteins S9 and S11.

One of the primary rRNA binding proteins, it binds directly to 16S rRNA where it nucleates assembly of the head domain of the 30S subunit. Is located at the subunit interface close to the decoding center, probably blocks exit of the E-site tRNA. The protein is Small ribosomal subunit protein uS7 of Ligilactobacillus salivarius (strain UCC118) (Lactobacillus salivarius).